Here is a 256-residue protein sequence, read N- to C-terminus: Agamous-like MADS-box protein AGL18 (256 aa).

In terms of domain architecture, MADS-box spans 1–61; that stretch reads MGRGRIEIKK…GKIYDFSSVC (61 aa). The K-box domain occupies 94–184; sequence NEAVLRNDDS…RKQVEMLGRG (91 aa). A disordered region spans residues 179–232; it reads EMLGRGSGPKVLNERPQDSSPEADPESSSSEEDENDNEEHHSDTSLQLGLSSTG. Over residues 199–215 the composition is skewed to acidic residues; that stretch reads PEADPESSSSEEDENDN. Residues 222–232 show a composition bias toward polar residues; that stretch reads TSLQLGLSSTG.

Mostly expressed in pollen, roots, flowers and siliques, and to a lower extent, in stems and leaves. Expressed in the endosperm and in developing male and female gametophytes. Also present in seedlings.

Its subcellular location is the nucleus. Probable transcription factor involved in the negative regulation of flowering, probably through the photoperiodic pathway. Prevents premature flowering. Downstream regulator of a subset of the MIKC* MADS-controlled genes required during pollen maturation. The sequence is that of Agamous-like MADS-box protein AGL18 (AGL18) from Arabidopsis thaliana (Mouse-ear cress).